We begin with the raw amino-acid sequence, 209 residues long: Large ribosomal subunit protein uL3 (209 aa).

A disordered region spans residues 141-164; that stretch reads RAVGSMGGSSDPSRTFKSKKMPGH.

This sequence belongs to the universal ribosomal protein uL3 family. Part of the 50S ribosomal subunit. Forms a cluster with proteins L14 and L19.

One of the primary rRNA binding proteins, it binds directly near the 3'-end of the 23S rRNA, where it nucleates assembly of the 50S subunit. The sequence is that of Large ribosomal subunit protein uL3 from Clostridium acetobutylicum (strain ATCC 824 / DSM 792 / JCM 1419 / IAM 19013 / LMG 5710 / NBRC 13948 / NRRL B-527 / VKM B-1787 / 2291 / W).